The sequence spans 657 residues: Pentatricopeptide repeat-containing protein At1g11710, mitochondrial (657 aa).

The transit peptide at 1–74 (MFGHVFSRRT…REFRSSPKLA (74 aa)) directs the protein to the mitochondrion. 14 PPR repeats span residues 147–181 (SPDV…GFCV), 182–216 (SVHA…GYVE), 217–251 (NVNT…GVWP), 252–282 (NVVS…MGMM), 290–324 (NAVT…GVDC), 325–359 (NERT…GLVV), 360–394 (NTVI…NMQI), 395–429 (DRFT…KLVE), 430–464 (DIVC…GLSL), 465–499 (DAIS…NKTS), 500–530 (NLVI…MEIK), 531–565 (DIVT…DGEK), 568–602 (SLVT…GVVP), and 603–637 (DSIT…GVTP).

The protein belongs to the PPR family. P subfamily.

It localises to the mitochondrion. The protein is Pentatricopeptide repeat-containing protein At1g11710, mitochondrial of Arabidopsis thaliana (Mouse-ear cress).